A 229-amino-acid chain; its full sequence is Sperm-associated microtubule inner protein 5 (229 aa).

The interval 181 to 201 (PEFSGPGQTPPSEDPQAPRPC) is disordered.

Microtubule inner protein component of sperm flagellar doublet microtubules. Expressed in testis (at protein level).

It is found in the cytoplasm. The protein localises to the cytoskeleton. It localises to the flagellum axoneme. The protein resides in the nucleus. Its function is as follows. Microtubule inner protein (MIP) part of the dynein-decorated doublet microtubules (DMTs) in flagellum axoneme. May serve to reinforce and thus stabilize the microtubule structure in the sperm flagella. In Mus musculus (Mouse), this protein is Sperm-associated microtubule inner protein 5 (Spmip5).